Here is a 100-residue protein sequence, read N- to C-terminus: Urease subunit gamma (100 aa).

This sequence belongs to the urease gamma subunit family. Heterotrimer of UreA (gamma), UreB (beta) and UreC (alpha) subunits. Three heterotrimers associate to form the active enzyme.

Its subcellular location is the cytoplasm. The enzyme catalyses urea + 2 H2O + H(+) = hydrogencarbonate + 2 NH4(+). Its pathway is nitrogen metabolism; urea degradation; CO(2) and NH(3) from urea (urease route): step 1/1. This chain is Urease subunit gamma, found in Burkholderia orbicola (strain MC0-3).